A 285-amino-acid polypeptide reads, in one-letter code: Probable E3 ubiquitin-protein ligase IE1 (285 aa).

The Cytoplasmic portion of the chain corresponds to 1–201; it reads MASKDSDVRC…LPGYWDRDDR (201 aa). Residues 124 to 183 form an RING-CH-type zinc finger; that stretch reads SIDEEGKQCWICRDGESLPEARYCNCYGDLQYCHEECLKTWISMSGEKKCKFCQTPYKVN. Positions 132, 135, 147, 149, 157, 160, 173, and 176 each coordinate Zn(2+). The chain crosses the membrane as a helical span at residues 202 to 222; the sequence is FVFIAGFIGMGTILAGWIASF. The Extracellular segment spans residues 223–238; that stretch reads FYLLVVLCGKYFTYKD. A helical transmembrane segment spans residues 239-259; that stretch reads VMIVVGGLAIIQVVGLMFSLF. The Cytoplasmic segment spans residues 260 to 285; the sequence is MYFQIGNLLRQYINYMTETNIDPLRT.

The protein localises to the membrane. The catalysed reaction is S-ubiquitinyl-[E2 ubiquitin-conjugating enzyme]-L-cysteine + [acceptor protein]-L-lysine = [E2 ubiquitin-conjugating enzyme]-L-cysteine + N(6)-ubiquitinyl-[acceptor protein]-L-lysine.. It functions in the pathway protein modification; protein ubiquitination. In terms of biological role, controls the expression of later classes of genes and also of the IE genes (Potential). E3 ubiquitin-protein ligase. E3 ubiquitin ligases accept ubiquitin from an E2 ubiquitin-conjugating enzyme in the form of a thioester and then directly transfer the ubiquitin to targeted substrates. This chain is Probable E3 ubiquitin-protein ligase IE1 (IE1), found in Bovine herpesvirus 4 (strain DN-599) (BoHV-4).